Here is an 87-residue protein sequence, read N- to C-terminus: Small ribosomal subunit protein bS18 (87 aa).

Belongs to the bacterial ribosomal protein bS18 family. As to quaternary structure, part of the 30S ribosomal subunit. Forms a tight heterodimer with protein bS6.

In terms of biological role, binds as a heterodimer with protein bS6 to the central domain of the 16S rRNA, where it helps stabilize the platform of the 30S subunit. This chain is Small ribosomal subunit protein bS18, found in Mesomycoplasma hyopneumoniae (strain 232) (Mycoplasma hyopneumoniae).